Reading from the N-terminus, the 126-residue chain is Small ribosomal subunit protein uS13 (126 aa).

Residues 98 to 126 (PVRGQSTKNNARTRKGRKKTVANKKKATK) form a disordered region. A compositionally biased stretch (basic residues) spans 108-126 (ARTRKGRKKTVANKKKATK).

The protein belongs to the universal ribosomal protein uS13 family. As to quaternary structure, part of the 30S ribosomal subunit. Forms a loose heterodimer with protein S19. Forms two bridges to the 50S subunit in the 70S ribosome.

Located at the top of the head of the 30S subunit, it contacts several helices of the 16S rRNA. In the 70S ribosome it contacts the 23S rRNA (bridge B1a) and protein L5 of the 50S subunit (bridge B1b), connecting the 2 subunits; these bridges are implicated in subunit movement. Contacts the tRNAs in the A and P-sites. In Bacteroides fragilis (strain ATCC 25285 / DSM 2151 / CCUG 4856 / JCM 11019 / LMG 10263 / NCTC 9343 / Onslow / VPI 2553 / EN-2), this protein is Small ribosomal subunit protein uS13.